We begin with the raw amino-acid sequence, 251 residues long: Small ribosomal subunit protein uS2 (251 aa).

The protein belongs to the universal ribosomal protein uS2 family.

The protein is Small ribosomal subunit protein uS2 of Synechococcus elongatus (strain ATCC 33912 / PCC 7942 / FACHB-805) (Anacystis nidulans R2).